The following is a 150-amino-acid chain: UPF0756 membrane protein Dd703_1075 (150 aa).

Helical transmembrane passes span 8 to 28 (LLIL…TITL), 51 to 71 (YGLS…IASG), 81 to 101 (AFLN…SWLG), and 114 to 134 (VVAG…GVPV).

The protein belongs to the UPF0756 family.

Its subcellular location is the cell membrane. In Musicola paradisiaca (strain Ech703) (Dickeya paradisiaca), this protein is UPF0756 membrane protein Dd703_1075.